We begin with the raw amino-acid sequence, 366 residues long: tRNA-specific 2-thiouridylase MnmA (366 aa).

ATP is bound by residues 6–13 (AMSGGVDS) and leucine 32. Cysteine 101 functions as the Nucleophile in the catalytic mechanism. Cysteine 101 and cysteine 199 form a disulfide bridge. Glycine 125 is an ATP binding site. The segment at 149-151 (KDQ) is interaction with tRNA. Catalysis depends on cysteine 199, which acts as the Cysteine persulfide intermediate.

This sequence belongs to the MnmA/TRMU family.

The protein localises to the cytoplasm. It catalyses the reaction S-sulfanyl-L-cysteinyl-[protein] + uridine(34) in tRNA + AH2 + ATP = 2-thiouridine(34) in tRNA + L-cysteinyl-[protein] + A + AMP + diphosphate + H(+). Catalyzes the 2-thiolation of uridine at the wobble position (U34) of tRNA, leading to the formation of s(2)U34. This Corynebacterium diphtheriae (strain ATCC 700971 / NCTC 13129 / Biotype gravis) protein is tRNA-specific 2-thiouridylase MnmA.